The sequence spans 341 residues: Glycerol-3-phosphate dehydrogenase [NAD(P)+] (341 aa).

4 residues coordinate NADPH: Ser14, Phe15, Arg35, and Lys108. 2 residues coordinate sn-glycerol 3-phosphate: Lys108 and Gly136. Ala140 lines the NADPH pocket. Lys191, Asp244, Ser254, Arg255, and Asn256 together coordinate sn-glycerol 3-phosphate. Lys191 functions as the Proton acceptor in the catalytic mechanism. Arg255 is a binding site for NADPH. NADPH-binding residues include Val279 and Glu281.

This sequence belongs to the NAD-dependent glycerol-3-phosphate dehydrogenase family.

The protein resides in the cytoplasm. It catalyses the reaction sn-glycerol 3-phosphate + NAD(+) = dihydroxyacetone phosphate + NADH + H(+). The catalysed reaction is sn-glycerol 3-phosphate + NADP(+) = dihydroxyacetone phosphate + NADPH + H(+). It participates in membrane lipid metabolism; glycerophospholipid metabolism. Catalyzes the reduction of the glycolytic intermediate dihydroxyacetone phosphate (DHAP) to sn-glycerol 3-phosphate (G3P), the key precursor for phospholipid synthesis. In Pseudomonas syringae pv. tomato (strain ATCC BAA-871 / DC3000), this protein is Glycerol-3-phosphate dehydrogenase [NAD(P)+].